We begin with the raw amino-acid sequence, 36 residues long: Photosystem I reaction center subunit VIII (36 aa).

A helical transmembrane segment spans residues 1 to 21 (MITFSFPSIFVPLVGLVFPAI).

The protein belongs to the PsaI family.

The protein resides in the plastid. Its subcellular location is the chloroplast thylakoid membrane. In terms of biological role, may help in the organization of the PsaL subunit. The chain is Photosystem I reaction center subunit VIII from Coffea arabica (Arabian coffee).